The following is a 91-amino-acid chain: Small ribosomal subunit protein bS18 (91 aa).

The protein belongs to the bacterial ribosomal protein bS18 family. In terms of assembly, part of the 30S ribosomal subunit. Forms a tight heterodimer with protein bS6.

In terms of biological role, binds as a heterodimer with protein bS6 to the central domain of the 16S rRNA, where it helps stabilize the platform of the 30S subunit. This chain is Small ribosomal subunit protein bS18, found in Paraburkholderia phymatum (strain DSM 17167 / CIP 108236 / LMG 21445 / STM815) (Burkholderia phymatum).